A 32-amino-acid chain; its full sequence is Dermaseptin-L1 (32 aa).

As to expression, expressed by the skin glands.

It localises to the secreted. Its function is as follows. Antimicrobial peptide active against the Gram-negative bacterium E.coli (MIC=8 uM) but inactive against the Gram-positive bacterium S.aureus. Also inhibits growth of zoospores of the chytrid fungus B.dendrobatidis at high concentrations (above 25 uM). Shows anticancer activities since it is cytolytic against HepG2 human hepatoma-derived cells (LC(50)=45 uM). Is only weakly hemolytic on human erythrocytes. The sequence is that of Dermaseptin-L1 from Agalychnis lemur (Lemur leaf frog).